A 139-amino-acid polypeptide reads, in one-letter code: Aspartate 1-decarboxylase (139 aa).

The active-site Schiff-base intermediate with substrate; via pyruvic acid is serine 25. Pyruvic acid (Ser) is present on serine 25. Position 57 (threonine 57) interacts with substrate. Tyrosine 58 acts as the Proton donor in catalysis. 73–75 (GAA) lines the substrate pocket. The disordered stretch occupies residues 117 to 139 (LGADPAEPVPGSDQARSPQAVTA). Residues 130-139 (QARSPQAVTA) are compositionally biased toward polar residues.

It belongs to the PanD family. In terms of assembly, heterooctamer of four alpha and four beta subunits. Pyruvate serves as cofactor. In terms of processing, is synthesized initially as an inactive proenzyme, which is activated by self-cleavage at a specific serine bond to produce a beta-subunit with a hydroxyl group at its C-terminus and an alpha-subunit with a pyruvoyl group at its N-terminus.

The protein resides in the cytoplasm. The enzyme catalyses L-aspartate + H(+) = beta-alanine + CO2. The protein operates within cofactor biosynthesis; (R)-pantothenate biosynthesis; beta-alanine from L-aspartate: step 1/1. Its function is as follows. Catalyzes the pyruvoyl-dependent decarboxylation of aspartate to produce beta-alanine. In Streptomyces avermitilis (strain ATCC 31267 / DSM 46492 / JCM 5070 / NBRC 14893 / NCIMB 12804 / NRRL 8165 / MA-4680), this protein is Aspartate 1-decarboxylase.